The following is a 358-amino-acid chain: Trans-enoyl reductase pvhC (358 aa).

Position 48–51 (valine 48–lysine 51) interacts with NADP(+). Isoleucine 134–leucine 141 provides a ligand contact to substrate. Residues serine 169–cysteine 172, serine 192–asparagine 195, tyrosine 210, and leucine 257–glutamate 258 contribute to the NADP(+) site. Glycine 278–leucine 282 lines the substrate pocket. An NADP(+)-binding site is contributed by valine 347–serine 348.

The protein belongs to the zinc-containing alcohol dehydrogenase family. In terms of assembly, monomer.

Its pathway is secondary metabolite biosynthesis. Functionally, trans-enoyl reductase; part of the gene cluster that mediates the biosynthesis of varicidin A, an antifungal natural product containing a cis-octahydrodecalin core. The PKS module of pvhA together with the enoylreductase pvhC catalyze the formation of the polyketide unit which is then conjugated to L-isoleucine by the condensation domain of the NRPS module. Activity of the Dieckmann cyclase domain (RED) of pvhA results in release of an acyclic tetramate. The cytochrome P450 monooxygenase pvhE then catalyzes the oxidation of the C21 methyl group to a to carboxylate group. The methyltransferase pvhD then further methylates the pvhE product. The Diels-Alderase pvhB is able to catalyze Diels-Alder cycloaddition using both pvhE and pvhD products as substrates to form the decalin ring, yielding varicidin B and A, respectively. This chain is Trans-enoyl reductase pvhC, found in Talaromyces variabilis (Penicillium variabile).